The primary structure comprises 264 residues: Thiazole synthase (264 aa).

Lys106 acts as the Schiff-base intermediate with DXP in catalysis. 1-deoxy-D-xylulose 5-phosphate is bound by residues Gly167, 193–194 (AG), and 215–216 (NS).

Belongs to the ThiG family. As to quaternary structure, homotetramer. Forms heterodimers with either ThiH or ThiS.

It is found in the cytoplasm. It carries out the reaction [ThiS sulfur-carrier protein]-C-terminal-Gly-aminoethanethioate + 2-iminoacetate + 1-deoxy-D-xylulose 5-phosphate = [ThiS sulfur-carrier protein]-C-terminal Gly-Gly + 2-[(2R,5Z)-2-carboxy-4-methylthiazol-5(2H)-ylidene]ethyl phosphate + 2 H2O + H(+). The protein operates within cofactor biosynthesis; thiamine diphosphate biosynthesis. Catalyzes the rearrangement of 1-deoxy-D-xylulose 5-phosphate (DXP) to produce the thiazole phosphate moiety of thiamine. Sulfur is provided by the thiocarboxylate moiety of the carrier protein ThiS. In vitro, sulfur can be provided by H(2)S. This is Thiazole synthase from Pseudomonas putida (strain W619).